The chain runs to 396 residues: Putative T-box protein 39 (396 aa).

The T-box DNA-binding region spans 11–192 (MAEEDRWKQW…KNSTYGNRLD (182 aa)). A disordered region spans residues 185 to 215 (STYGNRLDGGNKRKNTDSSEERTSKRSKNET). Residues 193 to 215 (GGNKRKNTDSSEERTSKRSKNET) show a composition bias toward basic and acidic residues.

Its subcellular location is the nucleus. The chain is Putative T-box protein 39 (tbx-39) from Caenorhabditis elegans.